Here is a 63-residue protein sequence, read N- to C-terminus: Cecropin-A1 (63 aa).

An N-terminal signal peptide occupies residues 1-23; that stretch reads MNFYNIFVFVALILAITIGQSEA. R62 carries the post-translational modification Arginine amide.

It belongs to the cecropin family.

The protein resides in the secreted. Its function is as follows. Cecropins have lytic and antibacterial activity against several Gram-positive and Gram-negative bacteria. The polypeptide is Cecropin-A1 (CecA1) (Drosophila sechellia (Fruit fly)).